An 88-amino-acid chain; its full sequence is LYR motif-containing protein 2 (88 aa).

The transit peptide at 1 to 19 (MATSRLPPATLTLKQFMRR) directs the protein to the mitochondrion.

The protein belongs to the complex I LYR family.

It localises to the mitochondrion. Functionally, involved in efficient integration of the N-module into mitochondrial respiratory chain complex I. This chain is LYR motif-containing protein 2 (LYRM2), found in Bos taurus (Bovine).